A 239-amino-acid chain; its full sequence is Ribosomal RNA small subunit methyltransferase G (239 aa).

Residues glycine 78, phenylalanine 83, 129-130, and arginine 148 each bind S-adenosyl-L-methionine; that span reads AE.

This sequence belongs to the methyltransferase superfamily. RNA methyltransferase RsmG family.

The protein resides in the cytoplasm. In terms of biological role, specifically methylates the N7 position of a guanine in 16S rRNA. This chain is Ribosomal RNA small subunit methyltransferase G, found in Alkaliphilus metalliredigens (strain QYMF).